We begin with the raw amino-acid sequence, 388 residues long: Succinate--CoA ligase [ADP-forming] subunit beta (388 aa).

Residues 9–244 form the ATP-grasp domain; the sequence is KQLFARYGLP…QSQEDPREAQ (236 aa). ATP is bound by residues lysine 46, 53-55, glutamate 99, threonine 102, and glutamate 107; that span reads GRG. Mg(2+) is bound by residues asparagine 199 and aspartate 213. Substrate is bound by residues asparagine 264 and 321–323; that span reads GIV.

Belongs to the succinate/malate CoA ligase beta subunit family. In terms of assembly, heterotetramer of two alpha and two beta subunits. Mg(2+) serves as cofactor.

It carries out the reaction succinate + ATP + CoA = succinyl-CoA + ADP + phosphate. The catalysed reaction is GTP + succinate + CoA = succinyl-CoA + GDP + phosphate. It functions in the pathway carbohydrate metabolism; tricarboxylic acid cycle; succinate from succinyl-CoA (ligase route): step 1/1. Succinyl-CoA synthetase functions in the citric acid cycle (TCA), coupling the hydrolysis of succinyl-CoA to the synthesis of either ATP or GTP and thus represents the only step of substrate-level phosphorylation in the TCA. The beta subunit provides nucleotide specificity of the enzyme and binds the substrate succinate, while the binding sites for coenzyme A and phosphate are found in the alpha subunit. The sequence is that of Succinate--CoA ligase [ADP-forming] subunit beta from Salmonella dublin (strain CT_02021853).